The chain runs to 273 residues: Zinc finger protein 80 (273 aa).

Residues tyrosine 49–histidine 71 form a C2H2-type 1 zinc finger. A C2H2-type 2; degenerate zinc finger spans residues tyrosine 77 to histidine 99. The segment at cysteine 105–histidine 127 adopts a C2H2-type 3; atypical zinc-finger fold. C2H2-type zinc fingers lie at residues tyrosine 133–histidine 155, phenylalanine 161–histidine 183, lysine 187–histidine 211, and tyrosine 217–histidine 239.

It belongs to the krueppel C2H2-type zinc-finger protein family.

Its subcellular location is the nucleus. Functionally, may be involved in transcriptional regulation. In Pan troglodytes (Chimpanzee), this protein is Zinc finger protein 80 (ZNF80).